The following is a 369-amino-acid chain: Serine/threonine-protein acetyltransferase HopZ1a (369 aa).

The segment at 1–46 is disordered; that stretch reads MGNVCVGGSRMSHQVYSPDRADTPPRSERNTPDRRQRAAGDAERTQ. Positions 19–46 are enriched in basic and acidic residues; the sequence is DRADTPPRSERNTPDRRQRAAGDAERTQ. Positions 49, 53, and 106 each coordinate 1D-myo-inositol hexakisphosphate. Active-site residues include His150 and Glu170. His150 lines the CoA pocket. CoA is bound by residues Ala177 and 211 to 212; that span reads KT. Cys216 is an active-site residue. Residues Asn222, 226–229, and 289–290 contribute to the 1D-myo-inositol hexakisphosphate site; these read KAHK and KH. At Lys289 the chain carries N6-acetyllysine; by autocatalysis. 292-295 lines the CoA pocket; the sequence is ASLT. Residues 314–317 and Arg326 each bind 1D-myo-inositol hexakisphosphate; that span reads SEGH. Residues 331–334 and 344–348 each bind CoA; these read RVKR and SNTQF. 1D-myo-inositol hexakisphosphate contacts are provided by Gln358 and Arg362.

Belongs to the acetyltransferase YopJ family. As to quaternary structure, interacts with host plant JAZ proteins (e.g. Glycine max JAZ1 and Arabidospis thaliana TIFY10B/JAZ2, TIFY11A/JAZ5, TIFY11B/JAZ6, TIFY5A/JAZ8 and TIFY3B/JAZ12) and triggers their degradation. Binds directly to SZE1 and SZE2 at the host plasma membrane; this interaction with a complex made of, at least, SZE1, BKN2/SZE2, ZAR1 and ZED1 triggers host immunity. The cofactor is 1D-myo-inositol hexakisphosphate. Autoacetylated at Lys-289; while autoacetylation at Lys-289 is required for virulence function to some extent, it is not essential.

It localises to the secreted. It is found in the host cell membrane. Its subcellular location is the host cytoplasm. The protein localises to the host cytoskeleton. The protein resides in the host nucleus. The enzyme catalyses L-threonyl-[protein] + acetyl-CoA = O-acetyl-L-threonyl-[protein] + CoA. It catalyses the reaction L-seryl-[protein] + acetyl-CoA = O-acetyl-L-seryl-[protein] + CoA. It carries out the reaction L-lysyl-[protein] + acetyl-CoA = N(6)-acetyl-L-lysyl-[protein] + CoA + H(+). With respect to regulation, 1D-myo-inositol hexakisphosphate activates protein-acetyltransferase activity via an allosteric mechanism: 1D-myo-inositol hexakisphosphate-binding induces a conformational rearrangement that stimulates the interaction with acetyl-CoA. Acetyltransferase activity is activated by phytic acid. Serine/threonine-protein acetyltransferase translocated into infected cells, which impairs host microtubule network and host immunity by mediating acetylation of target proteins. Blocks secretion in host cells by mediating acetylation of host tubulin, thereby impairing host microbubule network. Impairs host cell immunity by mediating acetylation of host TIFY/JAZ transcription repressors (Arabidopsis thaliana TIFY10B/JAZ2, TIFY11A/JAZ5, TIFY11B/JAZ6, TIFY5A/JAZ8, TIFY9/JAZ10 and TIFY3B/JAZ12), thereby activating host jasmonate signaling. The protein is Serine/threonine-protein acetyltransferase HopZ1a of Pseudomonas syringae pv. syringae.